Reading from the N-terminus, the 32-residue chain is Enhancer of rudimentary homolog (32 aa).

Belongs to the E(R) family. Homodimer. Component of the methylosome, a 20S complex containing at least CLNS1A/pICln, PRMT5/SKB1, WDR77/MEP50, PRMT1 and ERH. Interacts with CHTOP.

The protein resides in the nucleus. In terms of biological role, may have a role in the cell cycle. Its function is as follows. AP 3910 has antibacterial activity against B.megaterium. This Sus scrofa (Pig) protein is Enhancer of rudimentary homolog (ERH).